The chain runs to 276 residues: Undecaprenyl-diphosphatase (276 aa).

The next 8 helical transmembrane spans lie at 1–21 (MHWL…FLPV), 41–61 (LLLD…VFFA), 97–117 (ALLI…FHKI), 121–141 (LFAS…LLWA), 155–175 (VTWG…LPGI), 200–220 (FLLS…DASA), 231–251 (LGGI…LAIV), and 256–276 (LWWF…ANFV).

The protein belongs to the UppP family.

It localises to the cell inner membrane. It carries out the reaction di-trans,octa-cis-undecaprenyl diphosphate + H2O = di-trans,octa-cis-undecaprenyl phosphate + phosphate + H(+). Functionally, catalyzes the dephosphorylation of undecaprenyl diphosphate (UPP). Confers resistance to bacitracin. This chain is Undecaprenyl-diphosphatase, found in Desulfatibacillum aliphaticivorans.